The chain runs to 370 residues: Gibberellin 2-beta-dioxygenase 2 (370 aa).

The 121-residue stretch at 186–306 (DNDSLIRINH…RLSTIYFAAP (121 aa)) folds into the Fe2OG dioxygenase domain. Residue tyrosine 196 participates in 2-oxoglutarate binding. Positions 224, 226, and 287 each coordinate Fe cation. The 2-oxoglutarate site is built by arginine 297 and serine 299.

It belongs to the iron/ascorbate-dependent oxidoreductase family. GA2OX subfamily. Requires Fe(2+) as cofactor.

The enzyme catalyses gibberellin A1 + 2-oxoglutarate + O2 = gibberellin A8 + succinate + CO2. In terms of biological role, catalyzes the 2-beta-hydroxylation of several biologically active gibberellins, leading to the homeostatic regulation of their endogenous level. Catabolism of gibberellins (GAs) plays a central role in plant development. The sequence is that of Gibberellin 2-beta-dioxygenase 2 from Oryza sativa subsp. japonica (Rice).